A 1788-amino-acid polypeptide reads, in one-letter code: Glutamine and serine-rich protein 1 (1788 aa).

Residues 1–53 (MDAHYAPAGFAEPPAPPASAATQPAAPAWAYEARVPAAASSPSCSGSSPSLKA) are compositionally biased toward low complexity. Disordered stretches follow at residues 1–69 (MDAH…DVLQ), 472–498 (TRDL…VSQT), and 532–617 (SYSS…SKQD). 4 stretches are compositionally biased toward polar residues: residues 60 to 69 (PSQSESDVLQ), 478 to 492 (VSES…SQGL), 532 to 569 (SYSS…SAQP), and 576 to 594 (VQSS…SSIP). Ser670 and Ser940 each carry phosphoserine. Phosphothreonine is present on Thr1003. Ser1041 carries the post-translational modification Phosphoserine. 2 disordered regions span residues 1104–1163 (QPGD…TDVY) and 1234–1264 (IQTT…VSLS). A Glycyl lysine isopeptide (Lys-Gly) (interchain with G-Cter in SUMO2) cross-link involves residue Lys1112. Over residues 1126–1136 (PKEKAKGKEQG) the composition is skewed to basic and acidic residues. A Glycyl lysine isopeptide (Lys-Gly) (interchain with G-Cter in SUMO2) cross-link involves residue Lys1137. Phosphoserine is present on residues Ser1262, Ser1281, and Ser1282. Phosphothreonine is present on Thr1394. Ser1401 bears the Phosphoserine mark. The interval 1494–1588 (VCSKKPRNKP…DEGFEPPAPS (95 aa)) is disordered. Residues 1510–1537 (IPSKPSSISKTSDPPVSKTTTTKTPSTK) are compositionally biased toward low complexity. Positions 1545–1561 (IKAEPPPKKRKKWKEEF) are enriched in basic and acidic residues. Residues 1562 to 1575 (SSSQSESSPEVRSS) show a composition bias toward low complexity.

As to quaternary structure, interacts with TET1.

The protein resides in the chromosome. Functionally, plays an essential role in the protection and maintenance of transcriptional and developmental programs. Protects many bivalent promoters and poised enhancers from hypermethylation, showing a marked preference for these regulatory elements over other types of promoters or enhancers. Mechanistically, cooperates with TET1 and binds to DNA in a common complex to inhibit the binding of DNMT3A/3B and therefore de novo methylation. This Mus musculus (Mouse) protein is Glutamine and serine-rich protein 1.